The chain runs to 289 residues: Acetyl-coenzyme A carboxylase carboxyl transferase subunit beta 2 (289 aa).

The CoA carboxyltransferase N-terminal domain occupies 25–289 (VWTKCPSCEQ…TNKSIQPEAE (265 aa)). 4 residues coordinate Zn(2+): Cys29, Cys32, Cys48, and Cys51. A C4-type zinc finger spans residues 29–51 (CPSCEQVLYRIALKENLEVCPKC).

This sequence belongs to the AccD/PCCB family. As to quaternary structure, acetyl-CoA carboxylase is a heterohexamer composed of biotin carboxyl carrier protein (AccB), biotin carboxylase (AccC) and two subunits each of ACCase subunit alpha (AccA) and ACCase subunit beta (AccD). The cofactor is Zn(2+).

The protein localises to the cytoplasm. The catalysed reaction is N(6)-carboxybiotinyl-L-lysyl-[protein] + acetyl-CoA = N(6)-biotinyl-L-lysyl-[protein] + malonyl-CoA. It functions in the pathway lipid metabolism; malonyl-CoA biosynthesis; malonyl-CoA from acetyl-CoA: step 1/1. Component of the acetyl coenzyme A carboxylase (ACC) complex. Biotin carboxylase (BC) catalyzes the carboxylation of biotin on its carrier protein (BCCP) and then the CO(2) group is transferred by the transcarboxylase to acetyl-CoA to form malonyl-CoA. The protein is Acetyl-coenzyme A carboxylase carboxyl transferase subunit beta 2 of Vibrio campbellii (strain ATCC BAA-1116).